The sequence spans 418 residues: Serine hydroxymethyltransferase (418 aa).

(6S)-5,6,7,8-tetrahydrofolate is bound by residues L117 and 121–123 (GHL). Position 225 is an N6-(pyridoxal phosphate)lysine (K225).

The protein belongs to the SHMT family. As to quaternary structure, homodimer. The cofactor is pyridoxal 5'-phosphate.

It is found in the cytoplasm. It carries out the reaction (6R)-5,10-methylene-5,6,7,8-tetrahydrofolate + glycine + H2O = (6S)-5,6,7,8-tetrahydrofolate + L-serine. The protein operates within one-carbon metabolism; tetrahydrofolate interconversion. Its pathway is amino-acid biosynthesis; glycine biosynthesis; glycine from L-serine: step 1/1. In terms of biological role, catalyzes the reversible interconversion of serine and glycine with tetrahydrofolate (THF) serving as the one-carbon carrier. This reaction serves as the major source of one-carbon groups required for the biosynthesis of purines, thymidylate, methionine, and other important biomolecules. Also exhibits THF-independent aldolase activity toward beta-hydroxyamino acids, producing glycine and aldehydes, via a retro-aldol mechanism. This is Serine hydroxymethyltransferase from Mycoplasma mobile (strain ATCC 43663 / 163K / NCTC 11711) (Mesomycoplasma mobile).